Here is a 241-residue protein sequence, read N- to C-terminus: Uridylate kinase (241 aa).

15–18 (KLSG) provides a ligand contact to ATP. Residues 23-28 (GSEGFG) form an involved in allosteric activation by GTP region. Gly-57 contacts UMP. ATP contacts are provided by Gly-58 and Arg-62. UMP contacts are provided by residues Asp-77 and 138–145 (TGNPFFTT). Residues Thr-165, Phe-171, and Asp-174 each coordinate ATP.

This sequence belongs to the UMP kinase family. In terms of assembly, homohexamer.

It localises to the cytoplasm. The catalysed reaction is UMP + ATP = UDP + ADP. Its pathway is pyrimidine metabolism; CTP biosynthesis via de novo pathway; UDP from UMP (UMPK route): step 1/1. With respect to regulation, allosterically activated by GTP. Inhibited by UTP. In terms of biological role, catalyzes the reversible phosphorylation of UMP to UDP. The polypeptide is Uridylate kinase (Klebsiella pneumoniae subsp. pneumoniae (strain ATCC 700721 / MGH 78578)).